The chain runs to 881 residues: Interference hedgehog (881 aa).

Residues 1-26 form the signal peptide; that stretch reads MSSSSSSLLLMMLLLLLLLLTSKLEA. The Extracellular portion of the chain corresponds to 27-693; that stretch reads IPVLSSTSPS…NHNETYSLNP (667 aa). Ig-like C2-type domains are found at residues 37 to 138, 128 to 228, 242 to 330, and 336 to 425; these read PGVR…IARL, PLVV…IPSS, PYLL…YINV, and PVIV…LQVN. Disulfide bonds link C60/C122, C167/C212, and C266/C314. N-linked (GlcNAc...) asparagine glycosylation is found at N75, N98, N194, N201, N282, N349, N381, N430, and N455. C358 and C407 form a disulfide bridge. Fibronectin type-III domains follow at residues 450 to 558 and 566 to 661; these read PPSA…LQRG and VPEL…TQRS. 3 residues coordinate heparin: R486, K492, and K494. A glycan (N-linked (GlcNAc...) asparagine) is linked at N517. R532 provides a ligand contact to heparin. N-linked (GlcNAc...) asparagine glycosylation is present at N548. Positions 655–685 are disordered; the sequence is QGRTQRSKLTTTEQPIQQKGGDRNVNTTPNH. Positions 656 to 671 are enriched in polar residues; sequence GRTQRSKLTTTEQPIQ. N686 carries N-linked (GlcNAc...) asparagine glycosylation. The helical transmembrane segment at 694-714 threads the bilayer; the sequence is LLTGTIGGGALLLLLLIAFSF. The Cytoplasmic portion of the chain corresponds to 715-881; sequence CLCRRKNRNG…SSGSLNSVGV (167 aa). Disordered regions lie at residues 768–791 and 809–881; these read NPLD…NSPH and PTTY…SVGV. Polar residues predominate over residues 837-855; sequence PGSNNNLQQIGSETTTTGQ. The span at 865–881 shows a compositional bias: low complexity; sequence SSRSENLSSGSLNSVGV.

The protein belongs to the immunoglobulin superfamily. IHOG family. Homodimer. Heterotetramer; 2 iHog chains bind 2 hh chains when facilitated by heparin, heparin is required to promote high-affinity interactions between hh and iHog.

Its subcellular location is the membrane. Its function is as follows. Mediates response to the active Hedgehog (Hh) protein signal in embryos, functioning upstream or at the level of patched (ptc). This Drosophila willistoni (Fruit fly) protein is Interference hedgehog.